The following is a 115-amino-acid chain: Large ribosomal subunit protein bL20 (115 aa).

The protein belongs to the bacterial ribosomal protein bL20 family.

Binds directly to 23S ribosomal RNA and is necessary for the in vitro assembly process of the 50S ribosomal subunit. It is not involved in the protein synthesizing functions of that subunit. In Methylococcus capsulatus (strain ATCC 33009 / NCIMB 11132 / Bath), this protein is Large ribosomal subunit protein bL20.